The following is a 293-amino-acid chain: Bifunctional protein FolD (293 aa).

NADP(+)-binding positions include 164 to 166, Ser-193, and Thr-234; that span reads GRS.

Belongs to the tetrahydrofolate dehydrogenase/cyclohydrolase family. Homodimer.

The catalysed reaction is (6R)-5,10-methylene-5,6,7,8-tetrahydrofolate + NADP(+) = (6R)-5,10-methenyltetrahydrofolate + NADPH. The enzyme catalyses (6R)-5,10-methenyltetrahydrofolate + H2O = (6R)-10-formyltetrahydrofolate + H(+). It functions in the pathway one-carbon metabolism; tetrahydrofolate interconversion. Catalyzes the oxidation of 5,10-methylenetetrahydrofolate to 5,10-methenyltetrahydrofolate and then the hydrolysis of 5,10-methenyltetrahydrofolate to 10-formyltetrahydrofolate. The sequence is that of Bifunctional protein FolD from Azobacteroides pseudotrichonymphae genomovar. CFP2.